Here is a 161-residue protein sequence, read N- to C-terminus: Glycine/sarcosine/betaine reductase complex component A2 (161 aa).

Sec-42 is an active-site residue. Sec-42 is a non-standard amino acid (selenocysteine).

This sequence belongs to the GrdA family. As to quaternary structure, monomer. Component of the glycine, sarcosine and betaine reductase complexes, together with components B and C.

The enzyme catalyses acetyl phosphate + [thioredoxin]-disulfide + NH4(+) + H2O = [thioredoxin]-dithiol + glycine + phosphate + H(+). The catalysed reaction is acetyl phosphate + methylamine + [thioredoxin]-disulfide + H2O = sarcosine + [thioredoxin]-dithiol + phosphate + H(+). It catalyses the reaction acetyl phosphate + trimethylamine + [thioredoxin]-disulfide + H2O = glycine betaine + [thioredoxin]-dithiol + phosphate + H(+). Its function is as follows. In the first step of glycine, betaine and sarcosine reductases, the substrate is bound to component PB via a Schiff base intermediate. Then the PB-activated substrate is nucleophilically attacked by the selenol anion of component PA to transform it to a carboxymethylated selenoether and the respective amine. By action of component PC, acetyl phosphate is formed, leaving component PA in its oxidized state. Finally component PA becomes reduced by the thioredoxin system to start a new catalytic cycle of reductive deamination. This is Glycine/sarcosine/betaine reductase complex component A2 (grdA2) from Photobacterium profundum (strain SS9).